Reading from the N-terminus, the 551-residue chain is Solute carrier family 22 member 3 (551 aa).

Residues 21–41 form a helical membrane-spanning segment; the sequence is VFLLLCLTGVTFAFLFVGVVF. Residues Asn-72, Asn-99, and Asn-114 are each glycosylated (N-linked (GlcNAc...) asparagine). The chain crosses the membrane as a helical span at residues 177 to 197; the sequence is LIVYLISCFGVGITGVVVAFA. Asn-199 carries N-linked (GlcNAc...) asparagine glycosylation. The next 2 membrane-spanning stretches (helical) occupy residues 236–256 and 264–284; these read IVGIVIQMFFTLGIIILPGIA and GIQLAISLPSFLFLLYYWVVP. A Proline-rich sequence motif is present at residues 284 to 288; sequence PESPR. An N-linked (GlcNAc...) asparagine glycan is attached at Asn-317. Transmembrane regions (helical) follow at residues 376–396, 463–483, and 493–513; these read MDFFISGLVELPGALLILLTI, FGVSLCSGLCDFGGIIAPFLL, and LPLIIFGILASVCGGLVMLLP.

Belongs to the major facilitator (TC 2.A.1) superfamily. Organic cation transporter (TC 2.A.1.19) family. Highly expressed in placenta. Expressed in intestine, hear, kidney and lung. Widely expressed in brain, particularly in hippocampus, cerebellum, cerebral cortex. In the brain, expressed predominantly in regions located at the brain-cerebrospinal fluid border, with expression extending to regions that belong to monoaminergic pathways such as raphe nuclei, striatum and thalamus. In brain, expressed in neurons and glial cells of amygdala. Expression is low in kidney and lung and undetectable in liver. Expressed in Sertoli cells in testis. Expressed in tracheal and bronchial epithelium of the respiratory tract, where it localizes to the apical membrane of ciliated and brush cells, and in basal cells.

Its subcellular location is the cell membrane. The protein resides in the apical cell membrane. It is found in the basolateral cell membrane. The protein localises to the mitochondrion membrane. It localises to the endomembrane system. Its subcellular location is the nucleus membrane. The protein resides in the nucleus outer membrane. The catalysed reaction is (R)-noradrenaline(out) = (R)-noradrenaline(in). It catalyses the reaction (R)-adrenaline(out) = (R)-adrenaline(in). The enzyme catalyses serotonin(out) = serotonin(in). It carries out the reaction dopamine(out) = dopamine(in). The catalysed reaction is histamine(out) = histamine(in). It catalyses the reaction tyramine(in) = tyramine(out). The enzyme catalyses guanidine(out) = guanidine(in). It carries out the reaction agmatine(out) = agmatine(in). The catalysed reaction is spermidine(in) = spermidine(out). It catalyses the reaction L-histidyl-L-proline diketopiperazine(in) = L-histidyl-L-proline diketopiperazine(out). The enzyme catalyses (R)-salsolinol(in) = (R)-salsolinol(out). Functionally, electrogenic voltage-dependent transporter that mediates the transport of a variety of organic cations such as endogenous bioactive amines, cationic drugs and xenobiotics. Cation cellular uptake or release is driven by the electrochemical potential, i.e. membrane potential and concentration gradient. Functions as a Na(+)- and Cl(-)-independent, bidirectional uniporter. Implicated in neuronal monoamine neurotransmitters cellular uptake such as dopamine, adrenaline/epinephrine, noradrenaline/norepinephrine, histamine, serotonin and tyramine, thereby supporting a role in homeostatic regulation of aminergic neurotransmission in the brain. Transports dopaminergic neuromodulators cyclo(his-pro) and salsolinol with low efficiency. May be involved in the uptake and disposition of cationic compounds by renal clearance from the blood flow. May contribute to regulate the transport of cationic compounds in testis across the blood-testis-barrier. Mediates the transport of polyamine spermidine and putrescine. Mediates the bidirectional transport of polyamine agmatine. Also transports guanidine. May also mediate intracellular transport of organic cations, thereby playing a role in amine metabolism and intracellular signaling. This Rattus norvegicus (Rat) protein is Solute carrier family 22 member 3.